The following is a 237-amino-acid chain: D-aminoacyl-tRNA deacylase (237 aa).

Belongs to the DtdA deacylase family. As to quaternary structure, monomer. Zn(2+) is required as a cofactor.

It catalyses the reaction a D-aminoacyl-tRNA + H2O = a tRNA + a D-alpha-amino acid + H(+). The enzyme catalyses glycyl-tRNA(Ala) + H2O = tRNA(Ala) + glycine + H(+). Functionally, D-aminoacyl-tRNA deacylase with broad substrate specificity. By recycling D-aminoacyl-tRNA to D-amino acids and free tRNA molecules, this enzyme counteracts the toxicity associated with the formation of D-aminoacyl-tRNA entities in vivo. The chain is D-aminoacyl-tRNA deacylase from Sulfurisphaera tokodaii (strain DSM 16993 / JCM 10545 / NBRC 100140 / 7) (Sulfolobus tokodaii).